Here is a 621-residue protein sequence, read N- to C-terminus: Chaperone protein HtpG (621 aa).

The interval 1–328 is a; substrate-binding; the sequence is MTQEKKKFDA…SEDLPLNISR (328 aa). Positions 329–544 are b; it reads ESLQHNNVLE…DTAMDIRMER (216 aa). The c stretch occupies residues 545–621; that stretch reads FLIEQKQIAN…LNDILQKAIL (77 aa).

This sequence belongs to the heat shock protein 90 family. In terms of assembly, homodimer.

The protein localises to the cytoplasm. In terms of biological role, molecular chaperone. Has ATPase activity. The protein is Chaperone protein HtpG of Rickettsia prowazekii (strain Madrid E).